A 433-amino-acid chain; its full sequence is Keratin, type I cytoskeletal 47 kDa (433 aa).

The segment at 1–73 (MSYSTRSISQ…AFNVSVTSNN (73 aa)) is head. Residues 74 to 109 (GKETMQNLNDRLANYLDRVRSLEQANHELELKIREY) form a coil 1A region. In terms of domain architecture, IF rod spans 74–385 (GKETMQNLND…RLLEGEDTRF (312 aa)). The linker 1 stretch occupies residues 110–127 (LDKKAAVGSLDYSGYYNT). Residues 128 to 219 (INLLRSQIND…KNHEEELAVV (92 aa)) are coil 1B. Residues 220–242 (RSSARGNVDVQVDSAPPVDLAQI) form a linker 12 region. Residues 243-381 (MADVRSQYES…ATYRRLLEGE (139 aa)) are coil 2. Positions 382 to 433 (DTRFSQTETQKAVTIVSKEQSSSSIKKVKTVIEEVVDGKVVSSRVEELTETS) are tail.

Belongs to the intermediate filament family. As to quaternary structure, heterotetramer of two type I and two type II keratins.

The chain is Keratin, type I cytoskeletal 47 kDa (xk70a) from Xenopus laevis (African clawed frog).